Consider the following 1401-residue polypeptide: DNA-directed RNA polymerase subunit beta' (1401 aa).

Zn(2+) contacts are provided by Cys71, Cys73, Cys86, and Cys89. Mg(2+) is bound by residues Asp462, Asp464, and Asp466. Cys810, Cys884, Cys891, and Cys894 together coordinate Zn(2+). The disordered stretch occupies residues 1378-1401; sequence EKQATIVPSAPEPEPLALPTPEQS.

This sequence belongs to the RNA polymerase beta' chain family. As to quaternary structure, the RNAP catalytic core consists of 2 alpha, 1 beta, 1 beta' and 1 omega subunit. When a sigma factor is associated with the core the holoenzyme is formed, which can initiate transcription. The cofactor is Mg(2+). Zn(2+) serves as cofactor.

It catalyses the reaction RNA(n) + a ribonucleoside 5'-triphosphate = RNA(n+1) + diphosphate. In terms of biological role, DNA-dependent RNA polymerase catalyzes the transcription of DNA into RNA using the four ribonucleoside triphosphates as substrates. This is DNA-directed RNA polymerase subunit beta' from Rhodopseudomonas palustris (strain BisB18).